The chain runs to 62 residues: uncharacterized protein (62 aa).

Residues 17–62 (YNNYNNNNNNNNNNNNNNNNNNNNNNNNNNNNNNNNNNNNNNKNNN) form a disordered region.

This is an uncharacterized protein from Dictyostelium discoideum (Social amoeba).